The primary structure comprises 43 residues: Photosystem II reaction center protein K (43 aa).

The propeptide occupies 1–6; it reads MSLLLA. A helical membrane pass occupies residues 18 to 38; the sequence is IVDVLPIIPVLFLLLAFVWQA.

Belongs to the PsbK family. PSII is composed of 1 copy each of membrane proteins PsbA, PsbB, PsbC, PsbD, PsbE, PsbF, PsbH, PsbI, PsbJ, PsbK, PsbL, PsbM, PsbT, PsbX, PsbY, PsbZ, Psb30/Ycf12, at least 3 peripheral proteins of the oxygen-evolving complex and a large number of cofactors. It forms dimeric complexes.

Its subcellular location is the plastid. The protein resides in the chloroplast thylakoid membrane. In terms of biological role, one of the components of the core complex of photosystem II (PSII). PSII is a light-driven water:plastoquinone oxidoreductase that uses light energy to abstract electrons from H(2)O, generating O(2) and a proton gradient subsequently used for ATP formation. It consists of a core antenna complex that captures photons, and an electron transfer chain that converts photonic excitation into a charge separation. This Oltmannsiellopsis viridis (Marine flagellate) protein is Photosystem II reaction center protein K.